The chain runs to 370 residues: Protein PAM71, chloroplastic (370 aa).

The interval 1–38 is disordered; the sequence is MLSLNLSESLRIPFQNPRPPKSDFSSTSSSPSSSSRRC. The N-terminal 73 residues, 1–73, are a transit peptide targeting the chloroplast; it reads MLSLNLSESL…RNESQQLGFR (73 aa). Residues 22–38 show a composition bias toward low complexity; sequence SDFSSTSSSPSSSSRRC. Residues 74–113 are Stromal-facing; it reads CFQRNDAACYLEKAESEEHDRNLDVLVESSIAHSRREIQR. A helical transmembrane segment spans residues 114–134; that stretch reads VLMFLAVSGSVALLGTDPAFA. Residues 135 to 161 are Lumenal, thylakoid-facing; that stretch reads ASSIPNVTQSLVTSFGDLGDISSGFAS. Residues 162–182 traverse the membrane as a helical segment; sequence AFLLIFFSELGDKTFFIAALL. The Stromal segment spans residues 183–188; the sequence is AARNSA. A helical membrane pass occupies residues 189–209; the sequence is ATVFVGTFGALGIMTIISVVL. Residues 210-228 lie on the Lumenal, thylakoid side of the membrane; it reads GRTFHYVDEVLPFRFGGTD. The chain crosses the membrane as a helical span at residues 229-249; that stretch reads LPIDDIAAVCLLVYFGVSTLL. The Stromal segment spans residues 250 to 275; the sequence is DAVSDEGKADEEQKEAELAVSELSGN. A helical membrane pass occupies residues 276-296; it reads GAGIVAAANTIISTFALVFVA. The Lumenal, thylakoid segment spans residues 297–315; it reads EWGDKSFFSTIALAAASSP. The helical transmembrane segment at 316–336 threads the bilayer; sequence LGVIAGALAGHGAATLLAVLG. Residues 337 to 348 are Stromal-facing; that stretch reads GSLLGNFLSEKA. A helical transmembrane segment spans residues 349 to 369; it reads IAYVGGVLFLVFAAVTVAEIV. Position 370 (Thr-370) is a topological domain, lumenal, thylakoid.

It belongs to the GDT1 family. As to quaternary structure, homodimer.

It is found in the plastid. The protein localises to the chloroplast membrane. It localises to the thylakoid. Its function is as follows. Mn(2+)/H(+) exchanger, which transport Mn(2+)from the chloroplast stroma into the acidic thylakoid lumen. Might be a chloroplast-localized Ca(2+)/H(+) antiporter. Regulates Ca(2+), Mn(2+) and pH homeostasis. Required for chloroplast development. In Arabidopsis thaliana (Mouse-ear cress), this protein is Protein PAM71, chloroplastic.